The primary structure comprises 255 residues: DNA repair protein RecO (255 aa).

The protein belongs to the RecO family.

Involved in DNA repair and RecF pathway recombination. The polypeptide is DNA repair protein RecO (Bacillus velezensis (strain DSM 23117 / BGSC 10A6 / LMG 26770 / FZB42) (Bacillus amyloliquefaciens subsp. plantarum)).